A 254-amino-acid polypeptide reads, in one-letter code: Thiazole synthase (254 aa).

Catalysis depends on lysine 93, which acts as the Schiff-base intermediate with DXP. Residues glycine 154, 181 to 182 (AG), and 203 to 204 (NT) each bind 1-deoxy-D-xylulose 5-phosphate.

The protein belongs to the ThiG family. As to quaternary structure, homotetramer. Forms heterodimers with either ThiH or ThiS.

The protein resides in the cytoplasm. The enzyme catalyses [ThiS sulfur-carrier protein]-C-terminal-Gly-aminoethanethioate + 2-iminoacetate + 1-deoxy-D-xylulose 5-phosphate = [ThiS sulfur-carrier protein]-C-terminal Gly-Gly + 2-[(2R,5Z)-2-carboxy-4-methylthiazol-5(2H)-ylidene]ethyl phosphate + 2 H2O + H(+). The protein operates within cofactor biosynthesis; thiamine diphosphate biosynthesis. Functionally, catalyzes the rearrangement of 1-deoxy-D-xylulose 5-phosphate (DXP) to produce the thiazole phosphate moiety of thiamine. Sulfur is provided by the thiocarboxylate moiety of the carrier protein ThiS. In vitro, sulfur can be provided by H(2)S. This is Thiazole synthase from Ruegeria pomeroyi (strain ATCC 700808 / DSM 15171 / DSS-3) (Silicibacter pomeroyi).